Here is a 218-residue protein sequence, read N- to C-terminus: Sodium channel regulatory subunit beta-1 (218 aa).

A signal peptide spans 1–18; that stretch reads MGTLLAFVVGAALVSSAW. Topologically, residues 19–157 are extracellular; sequence GGCVEVDSET…DKANRDMASI (139 aa). Cystine bridges form between Cys-21–Cys-43 and Cys-40–Cys-121. Residues 22 to 150 form the Ig-like C2-type domain; that stretch reads VEVDSETEAV…KIHLEVVDKA (129 aa). N-linked (GlcNAc...) asparagine glycans are attached at residues Asn-93, Asn-110, Asn-114, and Asn-135. A helical membrane pass occupies residues 158-179; the sequence is VSEIMMYVLIVVLTIWLVAEMV. Residues 180 to 218 lie on the Cytoplasmic side of the membrane; that stretch reads YCYKKIAAATEAAAQENASEYLAITSESKENCTGVQVAE.

This sequence belongs to the sodium channel auxiliary subunit SCN1B (TC 8.A.17) family. In terms of assembly, a voltage-gated sodium (Nav) channel consists of an ion-conducting pore-forming alpha subunit functional on its own that is regulated by one or more beta subunits. Interacts with SCN1A; regulatory subunit of SCN1A/Nav1.1. Interacts with SCN3A; regulatory subunit of SCN3A/Nav1.3. Interacts with SCN4A; regulatory subunit of SCN4A/Nav1.4. Interacts with SCN5A; regulatory subunit of SCN5A/Nav1.5. Interacts with SCN8A; regulatory subunit of SCN8A/Nav1.6. Interacts with SCN9A; regulatory subunit of SCN9A/Nav1.7. Interacts with SCN10A; regulatory subunit of SCN10A/Nav1.8. Interacts with NFASC. Interacts with TMEM65.

Its subcellular location is the cell membrane. The protein localises to the perikaryon. The protein resides in the cell projection. It is found in the axon. Regulatory subunit of multiple voltage-gated sodium (Nav) channels directly mediating the depolarization of excitable membranes. Navs, also called VGSCs (voltage-gated sodium channels) or VDSCs (voltage-dependent sodium channels), operate by switching between closed and open conformations depending on the voltage difference across the membrane. In the open conformation they allow Na(+) ions to selectively pass through the pore, along their electrochemical gradient. The influx of Na+ ions provokes membrane depolarization, initiating the propagation of electrical signals throughout cells and tissues. The accessory beta subunits participate in localization and functional modulation of the Nav channels. Modulates the activity of SCN1A/Nav1.1, SCN2A/Nav1.2, SCN3A/Nav1.3, SCN4A/Nav1.4, SCN5A/Nav1.5, SCN8A/Nav1.6, SCN9A/Nav1.7 and SCN10A/Nav1.8. This chain is Sodium channel regulatory subunit beta-1, found in Bos taurus (Bovine).